Reading from the N-terminus, the 397-residue chain is MGPHFTLLLAALANCLCPGRPCIKCDQFVTDALKTFENTYLNDHLPHDIHKNVMRMVNHEVSSFGVVTSAEDSYLGAVDENTLEQATWSFLKDLKRITDSDLKGELFIKELLWMLRHQKDIFNNLARQFQKEVLCPNKCGVMSQTLIWCLKCEKQLHICRKSLDCGERHIEVHRSEDLVLDCLLSWHRASKGLTDYSFYRVWENSSETLIAKGKEPYLTKSMVGPEDAGNYRCVLDTINQGHATVIRYDVTVLPPKHSEENQPPNIITQEEHETPVHVTPQTPPGQEPESELYPELHPELYPELIPTVAQNPEKKMKTRLLILLTLGFVVLVASIIISVLHFRKVSAKLKNASDEVKPTASGSKSDQSLSQQMGLKKASQADFNSDYSGDKSEATEN.

The N-terminal stretch at Met-1–Pro-21 is a signal peptide. Disulfide bonds link Cys-22-Cys-149, Cys-25-Cys-152, Cys-135-Cys-159, Cys-139-Cys-165, and Cys-182-Cys-233. Over Cys-22–Arg-319 the chain is Extracellular. The important for interaction with IZUMO1R stretch occupies residues Trp-148–Arg-160. An Ig-like C2-type domain is found at Glu-167–Thr-251. N-linked (GlcNAc...) asparagine glycosylation occurs at Asn-204. The disordered stretch occupies residues Glu-271 to Leu-292. Residues Leu-320–Leu-340 traverse the membrane as a helical segment. Residues His-341 to Asn-397 lie on the Cytoplasmic side of the membrane. Residues Asn-351–Asn-397 are disordered. Polar residues predominate over residues Ala-360 to Met-373. At Ser-379 the chain carries Phosphoserine. The segment covering Ser-388 to Asn-397 has biased composition (basic and acidic residues).

It belongs to the Izumo family. Monomer, homodimer; disulfide-linked and homooligomer; depending on the context. Interacts with IZUMO1R/JUNO. IZUMO1 and IZUMO1R/JUNO form a complex with 1:1 stoichiometry. In gamete recognition, IZUMO1R/JUNO first binds to monomeric IZUMO1. The weak, but specific interaction with IZUMO1R/JUNO induces IZUMO1 homodimerization. The process follows a tight binding phase where IZUMO1 bends the entire structure towards the sperm membrane side through a thiol-disulfide exchange reaction. The molecule no longer binds to IZUMO1R/JUNO and instead binds to a putative second oocyte receptor. Interacts with ACE3. Part of a oolemmal binding multimeric complex (IZUMO1 complex) composed at least of IZUMO1 and GLIPR1L1; the complex assemblage is influenced by the maturation status of the male germ cell. Interacts with GLIPR1L1. Interacts with FREY; the interaction retains IZUMO1 at the endoplasmic reticulum membrane and coordinates IZUMO1 complex assembly. Interacts with WDR54. Forms a complex with SPACA6 and TMEM81 on spermatocyte cell membrane. N-glycosylated. Glycosylation is not essential for fusion and for proper protein trafficking in sperm. In terms of processing, phosphorylated. The cytoplasmic C-terminus is phosphorylated and undergoes phosphorylation changes during epididymal transit. In terms of tissue distribution, sperm-specific (at protein level). Detectable on sperm surface only after the acrosome reaction. Expressed in spermatozoa, more abundantly expressed in the head than the tail (at protein level).

Its subcellular location is the cell membrane. The protein localises to the cytoplasmic vesicle. The protein resides in the secretory vesicle. It is found in the acrosome membrane. Essential sperm cell-surface protein required for fertilization by acting as a ligand for IZUMO1R/JUNO receptor on egg. The IZUMO1:IZUMO1R/JUNO interaction is a necessary adhesion event between sperm and egg that is required for fertilization but is not sufficient for cell fusion. The ligand-receptor interaction probably does not act as a membrane 'fusogen'. Plays a critical role in sperm-oolemma binding prior to plasma membrane fusion. Can mediate cell-cell fusion in cultured mammalian cells independently of its binding to IZUMO1R/JUNO. This Mus musculus (Mouse) protein is Izumo sperm-egg fusion protein 1.